The sequence spans 520 residues: Amine oxidase [flavin-containing] B (520 aa).

At serine 2 the chain carries N-acetylserine. Residues 2–489 (SNKSDVIVVG…TFLERHLPSV (488 aa)) are Cytoplasmic-facing. N6-acetyllysine occurs at positions 52 and 248. Cysteine 397 is subject to S-8alpha-FAD cysteine. A helical; Anchor for type IV membrane protein membrane pass occupies residues 490-516 (PGLLKLFGLTTILSATALGFLAHKRGL). Residues 517 to 520 (FVHF) are Mitochondrial intermembrane-facing.

It belongs to the flavin monoamine oxidase family. As to quaternary structure, monomer, homo- or heterodimer (containing two subunits of similar size). Each subunit contains a covalently bound flavin. Enzymatically active as monomer. The cofactor is FAD.

The protein localises to the mitochondrion outer membrane. The enzyme catalyses a secondary aliphatic amine + O2 + H2O = a primary amine + an aldehyde + H2O2. The catalysed reaction is (R)-adrenaline + O2 + H2O = (R)-3,4-dihydroxymandelaldehyde + methylamine + H2O2. It carries out the reaction a primary methyl amine + O2 + H2O = an aldehyde + H2O2 + NH4(+). It catalyses the reaction benzylamine + O2 + H2O = benzaldehyde + H2O2 + NH4(+). The enzyme catalyses dopamine + O2 + H2O = 3,4-dihydroxyphenylacetaldehyde + H2O2 + NH4(+). The catalysed reaction is tyramine + O2 + H2O = (4-hydroxyphenyl)acetaldehyde + H2O2 + NH4(+). It carries out the reaction (R)-noradrenaline + O2 + H2O = (R)-3,4-dihydroxymandelaldehyde + H2O2 + NH4(+). It catalyses the reaction 2-phenylethylamine + O2 + H2O = 2-phenylacetaldehyde + H2O2 + NH4(+). The enzyme catalyses N-acetylputrescine + O2 + H2O = 4-acetamidobutanal + H2O2 + NH4(+). Functionally, catalyzes the oxidative deamination of primary and some secondary amines such as neurotransmitters, and exogenous amines including the tertiary amine, neurotoxin 1-methyl-4-phenyl-1,2,3,6-tetrahydropyridine (MPTP), with concomitant reduction of oxygen to hydrogen peroxide and participates in the metabolism of neuroactive and vasoactive amines in the central nervous system and peripheral tissues. Preferentially degrades benzylamine and phenylethylamine. This Mus musculus (Mouse) protein is Amine oxidase [flavin-containing] B.